Here is a 1912-residue protein sequence, read N- to C-terminus: Vitellogenin-1 (1912 aa).

Positions Met1–Ser15 are cleaved as a signal peptide. Positions Phe24–Val663 constitute a Vitellogenin domain. Asn163 carries N-linked (GlcNAc...) asparagine glycosylation. Residues Asp948 to Phe972 are disordered. Asn991 carries an N-linked (GlcNAc...) asparagine glycan. 2 disordered regions span residues Lys1080–Ile1329 and His1351–Asn1432. Composition is skewed to low complexity over residues Asn1092–Ser1124 and Ser1150–Lys1235. Asn1206 carries an N-linked (GlcNAc...) asparagine glycan. The span at Glu1259 to Gln1269 shows a compositional bias: basic and acidic residues. Over residues Ser1273–Ser1299 the composition is skewed to low complexity. Residues Trp1306–Arg1316 show a composition bias toward basic and acidic residues. The segment covering Ser1319 to Asp1328 has biased composition (polar residues). Residues Arg1357–Ser1381 are compositionally biased toward low complexity. Asn1375 carries an N-linked (GlcNAc...) asparagine glycan. The segment covering Ser1397–Arg1409 has biased composition (basic residues). Residues Ser1640 to Ser1818 enclose the VWFD domain. Cystine bridges form between Cys1642–Cys1781 and Cys1665–Cys1817. N-linked (GlcNAc...) asparagine glycans are attached at residues Asn1662, Asn1698, and Asn1703.

Phosvitin, an egg yolk storage protein, is one of the most highly phosphorylated (10%) proteins in nature. In terms of processing, cathepsin D is responsible for intraoocytic processing of vitellogenin. Post-translationally, may contain intrachain disulfide bonds. Produced by the liver, secreted into the blood and then sequestered by receptor mediated endocytosis into growing oocytes, where it is generally cleaved, giving rise to the respective yolk components.

Precursor of the egg-yolk proteins that are sources of nutrients during early development of oviparous organisms. In terms of biological role, phosvitin is believed to be of importance in sequestering calcium, iron and other cations for the developing embryo. In Gallus gallus (Chicken), this protein is Vitellogenin-1 (VTG1).